A 529-amino-acid chain; its full sequence is NAD(P)H-quinone oxidoreductase chain 4 1 (529 aa).

The next 13 membrane-spanning stretches (helical) occupy residues 4–24 (FPWL…IPFI), 36–56 (WYAL…FTNF), 91–111 (LILL…PVTL), 115–135 (LFYF…AVQD), 137–157 (LVFF…LAIW), 169–189 (FILY…AMAF), 209–229 (GFQL…LPIV), 243–263 (TAPV…YALI), 277–297 (FAPV…LTSY), 314–334 (IGFV…GAVL), 335–355 (QMVS…ATYD), 387–407 (LALP…GFAT), and 417–437 (VIVV…LLSM).

This sequence belongs to the complex I subunit 4 family.

Its subcellular location is the cellular thylakoid membrane. The catalysed reaction is a plastoquinone + NADH + (n+1) H(+)(in) = a plastoquinol + NAD(+) + n H(+)(out). It catalyses the reaction a plastoquinone + NADPH + (n+1) H(+)(in) = a plastoquinol + NADP(+) + n H(+)(out). NDH-1 shuttles electrons from NAD(P)H, via FMN and iron-sulfur (Fe-S) centers, to quinones in the respiratory chain. The immediate electron acceptor for the enzyme in this species is believed to be plastoquinone. Couples the redox reaction to proton translocation (for every two electrons transferred, four hydrogen ions are translocated across the cytoplasmic membrane), and thus conserves the redox energy in a proton gradient. The protein is NAD(P)H-quinone oxidoreductase chain 4 1 of Thermosynechococcus vestitus (strain NIES-2133 / IAM M-273 / BP-1).